The chain runs to 154 residues: Myoglobin (154 aa).

Positions 2–148 (GLSEGEWQLV…FRKDIATKYK (147 aa)) constitute a Globin domain. The residue at position 4 (S4) is a Phosphoserine. H65 contacts nitrite. An O2-binding site is contributed by H65. T68 is subject to Phosphothreonine. H94 contacts heme b.

Belongs to the globin family. Monomeric.

The protein localises to the cytoplasm. It localises to the sarcoplasm. It catalyses the reaction Fe(III)-heme b-[protein] + nitric oxide + H2O = Fe(II)-heme b-[protein] + nitrite + 2 H(+). The enzyme catalyses H2O2 + AH2 = A + 2 H2O. Monomeric heme protein which primary function is to store oxygen and facilitate its diffusion within muscle tissues. Reversibly binds oxygen through a pentacoordinated heme iron and enables its timely and efficient release as needed during periods of heightened demand. Depending on the oxidative conditions of tissues and cells, and in addition to its ability to bind oxygen, it also has a nitrite reductase activity whereby it regulates the production of bioactive nitric oxide. Under stress conditions, like hypoxia and anoxia, it also protects cells against reactive oxygen species thanks to its pseudoperoxidase activity. This chain is Myoglobin (MB), found in Phocoenoides dalli dalli (Dall's porpoise).